We begin with the raw amino-acid sequence, 393 residues long: Bifunctional enzyme Fae/Hps (393 aa).

Residues 1–161 are formaldehyde-activating enzyme; it reads MYLVGEALIG…YEKDRAAHGI (161 aa). H17 acts as the Proton donor in catalysis. D19, L48, K66, T68, and Q83 together coordinate substrate. The tract at residues 162 to 393 is 3-hexulose-6-phosphate synthase; that stretch reads MGFKVQRLWD…IDQFRIMTDF (232 aa).

It in the N-terminal section; belongs to the formaldehyde-activating enzyme family. This sequence in the C-terminal section; belongs to the HPS/KGPDC family. HPS subfamily.

It catalyses the reaction 5,6,7,8-tetrahydromethanopterin + formaldehyde = 5,10-methylenetetrahydromethanopterin + H2O. The catalysed reaction is D-ribulose 5-phosphate + formaldehyde = D-arabino-hex-3-ulose 6-phosphate. It participates in carbohydrate biosynthesis; D-ribose 5-phosphate biosynthesis. Functionally, catalyzes the condensation of formaldehyde with tetrahydromethanopterin (H(4)MPT) to 5,10-methylenetetrahydromethanopterin. Its function is as follows. Catalyzes the reversible formation of ribulose-5-phosphate and formaldehyde from 3-hexulose-6-phosphate. The sequence is that of Bifunctional enzyme Fae/Hps from Methanoregula boonei (strain DSM 21154 / JCM 14090 / 6A8).